A 706-amino-acid polypeptide reads, in one-letter code: Polycomb protein SCMH1 (706 aa).

MBT repeat units lie at residues 28-126 (FTWD…LQPP) and 134-235 (SSWP…LQPP). 2 disordered regions span residues 233–350 (QPPG…TVPS) and 576–595 (GSDRHLESRDPPRLSGRDPS). Composition is skewed to basic residues over residues 272 to 283 (RGRKPGKKRGRT) and 304 to 319 (FPKKRGPKPGSKRKPR). Residues 329 to 340 (PTTSTPEPDTST) show a composition bias toward low complexity. A compositionally biased stretch (basic and acidic residues) spans 576 to 591 (GSDRHLESRDPPRLSG). One can recognise an SAM domain in the interval 597–662 (WTVEDVMQFV…SFHIDRLKQV (66 aa)).

This sequence belongs to the SCM family. As to quaternary structure, associates with a PRC1-like complex. Interacts with the SAM domain of PHC1 via its SAM domain in vitro. Most abundant in testis. Moderate levels detected in heart, brain, lung, liver, skeletal muscle and kidney and lower levels in spleen.

The protein resides in the nucleus. Functionally, associates with Polycomb group (PcG) multiprotein complexes; the complex class is required to maintain the transcriptionally repressive state of some genes. This chain is Polycomb protein SCMH1, found in Mus musculus (Mouse).